The primary structure comprises 117 residues: Large ribosomal subunit protein uL23 (117 aa).

It belongs to the universal ribosomal protein uL23 family. As to quaternary structure, part of the 50S ribosomal subunit. Contacts protein L29, and trigger factor when it is bound to the ribosome.

Functionally, one of the early assembly proteins it binds 23S rRNA. One of the proteins that surrounds the polypeptide exit tunnel on the outside of the ribosome. Forms the main docking site for trigger factor binding to the ribosome. This Ruminiclostridium cellulolyticum (strain ATCC 35319 / DSM 5812 / JCM 6584 / H10) (Clostridium cellulolyticum) protein is Large ribosomal subunit protein uL23.